The chain runs to 81 residues: Beta-catenin-interacting protein 1 (81 aa).

Residue Ser-59 is modified to Phosphoserine.

It belongs to the CTNNBIP1 family. As to quaternary structure, binds CTNNB1.

The protein localises to the cytoplasm. The protein resides in the nucleus. Functionally, prevents the interaction between CTNNB1 and TCF family members, and acts as a negative regulator of the Wnt signaling pathway. The polypeptide is Beta-catenin-interacting protein 1 (CTNNBIP1) (Homo sapiens (Human)).